The sequence spans 323 residues: MSLYPEIEPYDHGMLDVGDGNHVYWETCGNPHGKPAVVLHGGPGSRASPGLRRYFDPAAYRIVLLDQRGAGRSLPRASAPDTDMSVNTTAHLMADLERLRVHLGIERWLVWGVSWGSVLGLRYAQTHPGVVTELVLTGVATGSNAEVALLTRGLGNIFPEAHERFLAELPPDARDGNLPAAYNRLLESPDPAVRERAARAWTDWETATIPAPPGSVARYQDPDFRMGFARTVTHYWGNDHFLGDGNDEGVVIRDAHLLKGIPGTLVQGSLDFGNLLGIVWRLHHAWPDSDLVIVDEAGHDAGTTGDEALLAATDKYARGGTAE.

Positions 37 to 301 (VVLHGGPGSR…VIVDEAGHDA (265 aa)) constitute an AB hydrolase-1 domain. The Nucleophile role is filled by Ser-114. Asp-271 is an active-site residue. Residue His-299 is the Proton donor of the active site.

Belongs to the peptidase S33 family.

It is found in the cytoplasm. The catalysed reaction is Release of N-terminal proline from a peptide.. Functionally, specifically catalyzes the removal of N-terminal proline residues from peptides. This is Probable proline iminopeptidase from Streptomyces coelicolor (strain ATCC BAA-471 / A3(2) / M145).